We begin with the raw amino-acid sequence, 250 residues long: tRNA (guanine-N(1)-)-methyltransferase (250 aa).

S-adenosyl-L-methionine-binding positions include glycine 113 and 133–138 (IGDYVL).

The protein belongs to the RNA methyltransferase TrmD family. In terms of assembly, homodimer.

Its subcellular location is the cytoplasm. It catalyses the reaction guanosine(37) in tRNA + S-adenosyl-L-methionine = N(1)-methylguanosine(37) in tRNA + S-adenosyl-L-homocysteine + H(+). Functionally, specifically methylates guanosine-37 in various tRNAs. The protein is tRNA (guanine-N(1)-)-methyltransferase of Shewanella amazonensis (strain ATCC BAA-1098 / SB2B).